Reading from the N-terminus, the 693-residue chain is MTDGKLSTSTNGVAFMGILDGRPGNPLQNLQHVNLKAPRLLSAPEYGPKLKLRALEDRHSLQSVDSGIPTLEIGNPEPVPCSAVHVRRKQSDSDLIPERAFQSACALPSCAPPAPSSTEREQSVRKSSTFPRTGYDSVKLYSPTSKALTRSDDVSVCSVSSLGTELSTTLSVSNEDILDLVVTSSSSAIVTLENDDDPQFTNVTLSSIKETRGLHQQDCVHEAEEGSKLKILGPFSNFFARNLLARKQSARLDKHNDLGWKLFGKAPLRENAQKDSKRIQKEYEDKAGRPSKPPSPKQNVRKNLDFEPLSTTALILEDRPANLPAKPAEEAQKHRQQYEEMVVQAKKRELKEAQRRKKQLEERCRVEESIGNAVLTWNNEILPNWETMWCSRKVRDLWWQGIPPSVRGKVWSLAIGNELNITHELFDICLARAKERWRSLSTGGSEVENEDAGFSAADREASLELIKLDISRTFPNLCIFQQGGPYHDMLHSILGAYTCYRPDVGYVQGMSFIAAVLILNLDTADAFIAFSNLLNKPCQMAFFRVDHGLMLTYFAAFEVFFEENLPKLFAHFKKNNLTPDIYLIDWIFTLYSKSLPLDLACRIWDVFCRDGEEFLFRTALGILKLFEDILTKMDFIHMAQFLTRLPEDLPAEELFASIATIQMQSRNKKWAQVLTALQKDSREMEKGSPSLRH.

S91 carries the post-translational modification Phosphoserine. 2 disordered regions span residues 108 to 130 and 271 to 304; these read PSCA…SSTF and NAQK…RKNL. Basic and acidic residues predominate over residues 271-288; it reads NAQKDSKRIQKEYEDKAG. Phosphoserine is present on S295. One can recognise a Rab-GAP TBC domain in the interval 401 to 611; it reads GIPPSVRGKV…RIWDVFCRDG (211 aa).

As to quaternary structure, interacts with ULK1. May interact with RAB11A and RAB11B, but does not exhibit any GTPase-activating activity toward these proteins. Interacts with TRAPPC8.

The protein localises to the golgi apparatus. It localises to the cis-Golgi network. It is found in the trans-Golgi network. Functionally, plays a role in the regulation of starvation-induced autophagosome formation. Together with the TRAPPIII complex, regulates a constitutive trafficking step from peripheral recycling endosomes to the early Golgi, maintaining the cycling pool of ATG9 required for initiation of autophagy. The polypeptide is TBC1 domain family member 14 (TBC1D14) (Homo sapiens (Human)).